The following is a 241-amino-acid chain: 1-(5-phosphoribosyl)-5-[(5-phosphoribosylamino)methylideneamino] imidazole-4-carboxamide isomerase (241 aa).

Residue Asp-10 is the Proton acceptor of the active site. Residue Asp-131 is the Proton donor of the active site.

The protein belongs to the HisA/HisF family.

It is found in the cytoplasm. It catalyses the reaction 1-(5-phospho-beta-D-ribosyl)-5-[(5-phospho-beta-D-ribosylamino)methylideneamino]imidazole-4-carboxamide = 5-[(5-phospho-1-deoxy-D-ribulos-1-ylimino)methylamino]-1-(5-phospho-beta-D-ribosyl)imidazole-4-carboxamide. It participates in amino-acid biosynthesis; L-histidine biosynthesis; L-histidine from 5-phospho-alpha-D-ribose 1-diphosphate: step 4/9. The sequence is that of 1-(5-phosphoribosyl)-5-[(5-phosphoribosylamino)methylideneamino] imidazole-4-carboxamide isomerase from Bifidobacterium adolescentis (strain ATCC 15703 / DSM 20083 / NCTC 11814 / E194a).